The following is a 424-amino-acid chain: Histidine--tRNA ligase (424 aa).

Belongs to the class-II aminoacyl-tRNA synthetase family. As to quaternary structure, homodimer.

Its subcellular location is the cytoplasm. It carries out the reaction tRNA(His) + L-histidine + ATP = L-histidyl-tRNA(His) + AMP + diphosphate + H(+). This Shewanella pealeana (strain ATCC 700345 / ANG-SQ1) protein is Histidine--tRNA ligase.